A 351-amino-acid chain; its full sequence is Adenine deaminase (351 aa).

Zn(2+)-binding residues include His-19, His-21, and His-208. Glu-211 (proton donor) is an active-site residue. Asp-288 contributes to the Zn(2+) binding site. Position 289 (Asp-289) interacts with substrate.

Belongs to the metallo-dependent hydrolases superfamily. Adenosine and AMP deaminases family. Adenine deaminase type 2 subfamily. It depends on Zn(2+) as a cofactor.

Its subcellular location is the cytoplasm. The protein localises to the nucleus. It catalyses the reaction adenine + H2O + H(+) = hypoxanthine + NH4(+). In terms of biological role, catalyzes the hydrolytic deamination of adenine to hypoxanthine. Plays an important role in the purine salvage pathway and in nitrogen catabolism. In Aspergillus oryzae (strain ATCC 42149 / RIB 40) (Yellow koji mold), this protein is Adenine deaminase (aah1).